Reading from the N-terminus, the 228-residue chain is MLHNVSKGVVYSDTALKGQDGDREGMWVGAGGALAPNTSSLFPPEPPGASSNIIPVYCALLATVVLGLLAYVAFKCWRSRKQRQQLAKARTVELGDPDRDQRHGDSSVFVDSPHGLEPCIPSQGPHADLGCRLYLHIPQQQQEEVQRLLILGEPAKGWQGLAGQLGYQAEAVETMACDQDPAYALLRDWAAQEGSGATLRVLEDALTAIGREDVVQVLSSPAEGCSVV.

At Met-1–Asn-52 the chain is on the extracellular side. N-linked (GlcNAc...) asparagine glycosylation is found at Asn-4 and Asn-37. The helical; Signal-anchor for type III membrane protein transmembrane segment at Ile-53–Ala-73 threads the bilayer. Topologically, residues Phe-74–Val-228 are cytoplasmic. Residues Glu-143 to Ala-222 enclose the Death domain.

In terms of assembly, interacts with NTRK1. Isoform 1 and isoform 2 interact with NGFR. Interacts with SORT1. Isoform 1 is N-glycosylated. Isoform 2 is not N-glycosylated. In terms of tissue distribution, detected in embryo, including embryonic brain. Detected at very low levels in adult testis, spleen, thymus and lung.

The protein resides in the cell membrane. Its subcellular location is the nucleus. Modulates NTRK1 signaling. Can activate several intracellular signaling pathways, leading to activation of JUN. Promotes translocation of SORT1 to the cell membrane, and thereby hinders lysosomal degradation of SOTR1 and promotes its interaction with NGFR. Both isoform 1 and isoform 2 promote apoptosis. This is Death domain-containing membrane protein NRADD (Nradd) from Rattus norvegicus (Rat).